A 475-amino-acid chain; its full sequence is 3-isopropylmalate dehydratase large subunit 1 (475 aa).

[4Fe-4S] cluster is bound by residues C353, C413, and C416.

Belongs to the aconitase/IPM isomerase family. LeuC type 1 subfamily. In terms of assembly, heterodimer of LeuC and LeuD. The cofactor is [4Fe-4S] cluster.

It carries out the reaction (2R,3S)-3-isopropylmalate = (2S)-2-isopropylmalate. The protein operates within amino-acid biosynthesis; L-leucine biosynthesis; L-leucine from 3-methyl-2-oxobutanoate: step 2/4. Its function is as follows. Catalyzes the isomerization between 2-isopropylmalate and 3-isopropylmalate, via the formation of 2-isopropylmaleate. This chain is 3-isopropylmalate dehydratase large subunit 1, found in Mannheimia succiniciproducens (strain KCTC 0769BP / MBEL55E).